Here is a 155-residue protein sequence, read N- to C-terminus: Snaclec bothrojaracin subunit alpha (155 aa).

The first 23 residues, 1–23 (MGRFLFVSFGLLVVFLSLSGTAA), serve as a signal peptide directing secretion. 3 cysteine pairs are disulfide-bonded: Cys25-Cys36, Cys53-Cys150, and Cys125-Cys142. The region spanning 32-151 (HEGHCYKFFQ…CGQQNPFVCK (120 aa)) is the C-type lectin domain.

It belongs to the snaclec family. In terms of assembly, heterodimer of subunits alpha and beta; disulfide-linked. In terms of tissue distribution, expressed by the venom gland.

Its subcellular location is the secreted. In terms of biological role, this potent antithrombotic agent acts in a calcium-independent manner. Exerts its anticoagulant effect by two distinct mechanisms. It binds to activated thrombin through exosite 1, blocking fibrinogen clotting, platelet activation, factor V activation and other effects, and it interacts with prothrombin (F2), decreasing its proteolytic activation -especially in the presence of factor Va. In vivo, intravenous injection before thrombosis induction causes a significant decrease in thrombus weight. Furthermore, BJC shows a prolonged effect by remaining in the plasma bound to prothrombin for at least 12 hours. The chain is Snaclec bothrojaracin subunit alpha from Bothrops jararaca (Jararaca).